A 60-amino-acid polypeptide reads, in one-letter code: uncharacterized protein (60 aa).

This is an uncharacterized protein from Treponema pallidum (strain Nichols).